A 459-amino-acid polypeptide reads, in one-letter code: Serine/threonine-protein kinase 12 (459 aa).

The disordered stretch occupies residues 1–30 (MEEDYQQPRFTIGRQSSMAPEKIPEPSVHS). ANK repeat units follow at residues 42-71 (DGGVRLMYLANEGDIEGIKELIDSGIDANY), 75-104 (DDRTALHVAACQGLKDVVELLLDRKAEVDP), and 108-137 (WGSTPFADAIFYKNIDVIKILEIHGAKHPM). The Protein kinase domain maps to 102–417 (VDPKDRWGST…EIIKRLESIL (316 aa)). Residues 108 to 116 (WGSTPFADA) and lysine 184 each bind ATP. Aspartate 281 serves as the catalytic Proton acceptor.

This sequence belongs to the protein kinase superfamily. Ser/Thr protein kinase family. In terms of assembly, interacts with BLUS1, PHOT1 and PHOT2. As to expression, accumulates in leaves, stems, petioles and roots, especially in guard cells.

It is found in the cytoplasm. The protein localises to the cytosol. The enzyme catalyses L-seryl-[protein] + ATP = O-phospho-L-seryl-[protein] + ADP + H(+). It carries out the reaction L-threonyl-[protein] + ATP = O-phospho-L-threonyl-[protein] + ADP + H(+). Serine/threonine protein kinase that phosphorylates proteins on serine and threonine residues. Mediates blue light-dependent stomatal opening in guard cells by promoting plasma membrane-type ATPases (AHA1 and AHA2) phosphorylation. The sequence is that of Serine/threonine-protein kinase 12 from Arabidopsis thaliana (Mouse-ear cress).